A 356-amino-acid polypeptide reads, in one-letter code: ATP-dependent 6-phosphofructokinase (356 aa).

ATP is bound by residues G15, 78–79 (KG), and 115–118 (GEGT). E116 is a Mg(2+) binding site. Residues 138–140 (TID), R175, 182–184 (MGR), E235, R272, and 278–281 (HLQR) each bind substrate. D140 functions as the Proton acceptor in the catalytic mechanism.

The protein belongs to the phosphofructokinase type A (PFKA) family. Mixed-substrate PFK group III subfamily. As to quaternary structure, homodimer or homotetramer. Mg(2+) is required as a cofactor.

The protein localises to the cytoplasm. It carries out the reaction beta-D-fructose 6-phosphate + ATP = beta-D-fructose 1,6-bisphosphate + ADP + H(+). It participates in carbohydrate degradation; glycolysis; D-glyceraldehyde 3-phosphate and glycerone phosphate from D-glucose: step 3/4. Its function is as follows. Catalyzes the phosphorylation of D-fructose 6-phosphate to fructose 1,6-bisphosphate by ATP, the first committing step of glycolysis. This Chloroflexus aggregans (strain MD-66 / DSM 9485) protein is ATP-dependent 6-phosphofructokinase.